Reading from the N-terminus, the 393-residue chain is MTAPATRNDLMIVNMGPQHPSMHGVLRLIVTLDGEDVIDCEPILGYLHRGMEKIAENRTIIQYLPYVTRWDYLATMFTEAITVNAPEQLGNIQVPKRASYIRVIMLELSRIASHLLWLGPFMADIGAQTPFFYIFRERELIYDLFEAATGMRMMHNFFRIGGVAADLPHGWIDKCLDFCDYFLTRVTEYQRLITRNPIFLERVEGVGIIGGEEAINWGLSGPMLRASGIQWDLRKVDHYESYDEFDWGVQWQKEGDSLARYLVRISEMTESVKIIQQALEGITGGPYENLEIRRFDKVWDPEWNDFDYRFISKKPSPTFELSKQELYVRVEAPKGELGIFLIGDKGIFPWRWKIRPPGFINLQILPQLVKRMKLADIMTILGSIDIIMGEVDR.

Belongs to the complex I 49 kDa subunit family. As to quaternary structure, NDH is composed of at least 16 different subunits, 5 of which are encoded in the nucleus.

It localises to the plastid. The protein localises to the chloroplast thylakoid membrane. It carries out the reaction a plastoquinone + NADH + (n+1) H(+)(in) = a plastoquinol + NAD(+) + n H(+)(out). The enzyme catalyses a plastoquinone + NADPH + (n+1) H(+)(in) = a plastoquinol + NADP(+) + n H(+)(out). In terms of biological role, NDH shuttles electrons from NAD(P)H:plastoquinone, via FMN and iron-sulfur (Fe-S) centers, to quinones in the photosynthetic chain and possibly in a chloroplast respiratory chain. The immediate electron acceptor for the enzyme in this species is believed to be plastoquinone. Couples the redox reaction to proton translocation, and thus conserves the redox energy in a proton gradient. The chain is NAD(P)H-quinone oxidoreductase subunit H, chloroplastic from Daucus carota (Wild carrot).